Reading from the N-terminus, the 435-residue chain is Xylose isomerase (435 aa).

Catalysis depends on residues His99 and Asp102. Residues Glu230, Glu266, His269, Asp294, Asp305, Asp307, and Asp337 each contribute to the Mg(2+) site.

The protein belongs to the xylose isomerase family. As to quaternary structure, homotetramer. The cofactor is Mg(2+).

Its subcellular location is the cytoplasm. It carries out the reaction alpha-D-xylose = alpha-D-xylulofuranose. This Tetragenococcus halophilus (Pediococcus halophilus) protein is Xylose isomerase (xylA).